Here is an 874-residue protein sequence, read N- to C-terminus: Alanine--tRNA ligase (874 aa).

4 residues coordinate Zn(2+): H564, H568, C665, and H669.

This sequence belongs to the class-II aminoacyl-tRNA synthetase family. The cofactor is Zn(2+).

Its subcellular location is the cytoplasm. The enzyme catalyses tRNA(Ala) + L-alanine + ATP = L-alanyl-tRNA(Ala) + AMP + diphosphate. In terms of biological role, catalyzes the attachment of alanine to tRNA(Ala) in a two-step reaction: alanine is first activated by ATP to form Ala-AMP and then transferred to the acceptor end of tRNA(Ala). Also edits incorrectly charged Ser-tRNA(Ala) and Gly-tRNA(Ala) via its editing domain. The polypeptide is Alanine--tRNA ligase (Acidovorax sp. (strain JS42)).